Reading from the N-terminus, the 130-residue chain is Large-conductance mechanosensitive channel (130 aa).

A run of 2 helical transmembrane segments spans residues 14–34 (IIDL…VTSF) and 73–93 (FVDF…LVKF).

The protein belongs to the MscL family. As to quaternary structure, homopentamer.

The protein resides in the cell membrane. Functionally, channel that opens in response to stretch forces in the membrane lipid bilayer. May participate in the regulation of osmotic pressure changes within the cell. The sequence is that of Large-conductance mechanosensitive channel from Oceanobacillus iheyensis (strain DSM 14371 / CIP 107618 / JCM 11309 / KCTC 3954 / HTE831).